The sequence spans 333 residues: Ornithine carbamoyltransferase (333 aa).

Residues 56–59, glutamine 83, arginine 107, and 134–137 contribute to the carbamoyl phosphate site; these read STRT and HPTQ. L-ornithine is bound by residues asparagine 167, aspartate 231, and 235–236; that span reads SM. Carbamoyl phosphate is bound by residues 273 to 274 and arginine 318; that span reads CL.

This sequence belongs to the aspartate/ornithine carbamoyltransferase superfamily. OTCase family.

Its subcellular location is the cytoplasm. It catalyses the reaction carbamoyl phosphate + L-ornithine = L-citrulline + phosphate + H(+). It participates in amino-acid biosynthesis; L-arginine biosynthesis; L-arginine from L-ornithine and carbamoyl phosphate: step 1/3. Functionally, reversibly catalyzes the transfer of the carbamoyl group from carbamoyl phosphate (CP) to the N(epsilon) atom of ornithine (ORN) to produce L-citrulline. This is Ornithine carbamoyltransferase (argF) from Staphylococcus aureus (strain Mu50 / ATCC 700699).